The sequence spans 106 residues: UPF0145 protein NE1032 (106 aa).

It belongs to the UPF0145 family.

This chain is UPF0145 protein NE1032, found in Nitrosomonas europaea (strain ATCC 19718 / CIP 103999 / KCTC 2705 / NBRC 14298).